We begin with the raw amino-acid sequence, 326 residues long: Glutaminase 2 (326 aa).

Serine 73, asparagine 125, glutamate 169, asparagine 176, tyrosine 200, tyrosine 252, and valine 270 together coordinate substrate.

It belongs to the glutaminase family. In terms of assembly, homotetramer.

It carries out the reaction L-glutamine + H2O = L-glutamate + NH4(+). In Bacillus anthracis, this protein is Glutaminase 2.